The following is a 213-amino-acid chain: Kynurenine formamidase (213 aa).

Residue W18 participates in substrate binding. Positions 48, 52, and 54 each coordinate Zn(2+). Catalysis depends on H58, which acts as the Proton donor/acceptor. Zn(2+) is bound by residues H160 and E172.

The protein belongs to the Cyclase 1 superfamily. KynB family. In terms of assembly, homodimer. Zn(2+) is required as a cofactor.

The catalysed reaction is N-formyl-L-kynurenine + H2O = L-kynurenine + formate + H(+). It participates in amino-acid degradation; L-tryptophan degradation via kynurenine pathway; L-kynurenine from L-tryptophan: step 2/2. Its function is as follows. Catalyzes the hydrolysis of N-formyl-L-kynurenine to L-kynurenine, the second step in the kynurenine pathway of tryptophan degradation. This Burkholderia pseudomallei (strain 1710b) protein is Kynurenine formamidase.